A 400-amino-acid chain; its full sequence is tRNA-specific 2-thiouridylase MnmA (400 aa).

Residues 19–26 and Leu-45 each bind ATP; that span reads AMSGGVDS. Cys-113 functions as the Nucleophile in the catalytic mechanism. Cys-113 and Cys-210 form a disulfide bridge. Gly-137 serves as a coordination point for ATP. The tract at residues 160–162 is interaction with tRNA; sequence RDQ. The active-site Cysteine persulfide intermediate is Cys-210.

It belongs to the MnmA/TRMU family.

Its subcellular location is the cytoplasm. The enzyme catalyses S-sulfanyl-L-cysteinyl-[protein] + uridine(34) in tRNA + AH2 + ATP = 2-thiouridine(34) in tRNA + L-cysteinyl-[protein] + A + AMP + diphosphate + H(+). Catalyzes the 2-thiolation of uridine at the wobble position (U34) of tRNA, leading to the formation of s(2)U34. The sequence is that of tRNA-specific 2-thiouridylase MnmA from Nitrobacter hamburgensis (strain DSM 10229 / NCIMB 13809 / X14).